We begin with the raw amino-acid sequence, 151 residues long: Large ribosomal subunit protein bL9 (151 aa).

Belongs to the bacterial ribosomal protein bL9 family.

Functionally, binds to the 23S rRNA. The sequence is that of Large ribosomal subunit protein bL9 from Pelodictyon phaeoclathratiforme (strain DSM 5477 / BU-1).